Here is a 483-residue protein sequence, read N- to C-terminus: Keratin, type II cytoskeletal 8 (483 aa).

Positions 1–16 (MSIRVTQKSYKVSTSG) are enriched in polar residues. The segment at 1–41 (MSIRVTQKSYKVSTSGPRAFSSRSYTSGPGSRISSSSFSRV) is disordered. The segment at 1–90 (MSIRVTQKSY…DPNIQAVRTQ (90 aa)) is head. A Phosphoserine; by PKC/PRKCE modification is found at Ser-9. A Glycyl lysine isopeptide (Lys-Gly) (interchain with G-Cter in SUMO2) cross-link involves residue Lys-11. Ser-13, Ser-15, Ser-21, and Ser-22 each carry phosphoserine. Omega-N-methylarginine is present on Arg-23. Phosphoserine; by PKC/PRKCE is present on Ser-24. Residues 24 to 41 (SYTSGPGSRISSSSFSRV) show a composition bias toward low complexity. Thr-26 bears the Phosphothreonine mark. Phosphoserine occurs at positions 27 and 31. Residue Arg-32 is modified to Omega-N-methylarginine. Residues Ser-34, Ser-37, and Ser-39 each carry the phosphoserine modification. An Omega-N-methylarginine modification is found at Arg-40. Phosphoserine occurs at positions 43 and 44. Asymmetric dimethylarginine; alternate is present on Arg-47. The residue at position 47 (Arg-47) is an Omega-N-methylarginine; alternate. Ser-74 carries the post-translational modification Phosphoserine; by MAPK. A coil 1A region spans residues 91-126 (EKEQIKTLNNKFASFIDKVRFLEQQNKMLETKWSLL). Positions 91 to 402 (EKEQIKTLNN…KLLEGEESRL (312 aa)) constitute an IF rod domain. Lys-101 carries the N6-malonyllysine modification. Glycyl lysine isopeptide (Lys-Gly) (interchain with G-Cter in SUMO2) cross-links involve residues Lys-122 and Lys-130. The linker 1 stretch occupies residues 127–143 (QQQKTARSNMDNMFESY). Residues 144 to 235 (INNLRRQLET…QLYEEEIREL (92 aa)) form a coil 1B region. Lys-197 is covalently cross-linked (Glycyl lysine isopeptide (Lys-Gly) (interchain with G-Cter in SUMO1); alternate). Residue Lys-197 forms a Glycyl lysine isopeptide (Lys-Gly) (interchain with G-Cter in SUMO2); alternate linkage. Lys-207 is modified (N6-acetyllysine). The residue at position 228 (Tyr-228) is a Phosphotyrosine. Positions 236–259 (QSQISDTSVVLSMDNSRSLDMDSI) are linker 12. Phosphoserine occurs at positions 253 and 258. The segment at 260-398 (IAEVKAQYED…ATYRKLLEGE (139 aa)) is coil 2. Residues 261 to 382 (AEVKAQYEDI…EYQELMNVKL (122 aa)) form a necessary for interaction with PNN region. A Glycyl lysine isopeptide (Lys-Gly) (interchain with G-Cter in SUMO2) cross-link involves residue Lys-264. Ser-274 is subject to Phosphoserine. Lys-285 participates in a covalent cross-link: Glycyl lysine isopeptide (Lys-Gly) (interchain with G-Cter in SUMO2). The residue at position 291 (Ser-291) is a Phosphoserine. A Glycyl lysine isopeptide (Lys-Gly) (interchain with G-Cter in SUMO2); alternate cross-link involves residue Lys-295. Residue Lys-295 is modified to N6-acetyllysine; alternate. A Glycyl lysine isopeptide (Lys-Gly) (interchain with G-Cter in SUMO2) cross-link involves residue Lys-304. Lys-325 is covalently cross-linked (Glycyl lysine isopeptide (Lys-Gly) (interchain with G-Cter in SUMO2); alternate). Position 325 is an N6-acetyllysine; alternate (Lys-325). Ser-330 bears the Phosphoserine mark. Lys-393 participates in a covalent cross-link: Glycyl lysine isopeptide (Lys-Gly) (interchain with G-Cter in SUMO2). The tract at residues 399 to 483 (ESRLESGMQN…VSESSDVLPK (85 aa)) is tail. A phosphoserine mark is found at Ser-400, Ser-404, Ser-410, Ser-417, and Ser-424. At Ser-432 the chain carries Phosphoserine; by CaMK2 and MAPK. A Glycyl lysine isopeptide (Lys-Gly) (interchain with G-Cter in SUMO1); alternate cross-link involves residue Lys-472. Lys-472 participates in a covalent cross-link: Glycyl lysine isopeptide (Lys-Gly) (interchain with G-Cter in SUMO2); alternate. Residues Ser-475, Ser-477, and Ser-478 each carry the phosphoserine modification.

Belongs to the intermediate filament family. Heterotetramer of two type I and two type II keratins. Forms a heterodimer with KRT18. Associates with KRT20. Interacts with PLEC isoform 1C, when in a heterodimer with KRT18. Interacts with PNN. When associated with KRT19, interacts with DMD. Interacts with TCHP. Interacts with APEX1. Interacts with GPER1. Interacts with EPPK1. Interacts with PKP1 and PKP2. In terms of assembly, (Microbial infection) Interacts with hepatitis C virus/HCV core protein. Post-translationally, phosphorylation on serine residues is enhanced during EGF stimulation and mitosis. Ser-74 phosphorylation plays an important role in keratin filament reorganization. In terms of processing, O-glycosylated. O-GlcNAcylation at multiple sites increases solubility, and decreases stability by inducing proteasomal degradation. O-glycosylated (O-GlcNAcylated), in a cell cycle-dependent manner. Observed in muscle fibers accumulating in the costameres of myoplasm at the sarcolemma membrane in structures that contain dystrophin and spectrin. Expressed in gingival mucosa and hard palate of the oral cavity.

It is found in the cytoplasm. Its subcellular location is the nucleus. The protein resides in the nucleoplasm. The protein localises to the nucleus matrix. In terms of biological role, together with KRT19, helps to link the contractile apparatus to dystrophin at the costameres of striated muscle. The sequence is that of Keratin, type II cytoskeletal 8 (KRT8) from Homo sapiens (Human).